The chain runs to 101 residues: Small ribosomal subunit protein uS14 (101 aa).

The protein belongs to the universal ribosomal protein uS14 family. As to quaternary structure, part of the 30S ribosomal subunit. Contacts proteins S3 and S10.

Functionally, binds 16S rRNA, required for the assembly of 30S particles and may also be responsible for determining the conformation of the 16S rRNA at the A site. The polypeptide is Small ribosomal subunit protein uS14 (Ectopseudomonas mendocina (strain ymp) (Pseudomonas mendocina)).